A 294-amino-acid chain; its full sequence is Elongation factor Ts (294 aa).

An involved in Mg(2+) ion dislocation from EF-Tu region spans residues T79 to V82.

It belongs to the EF-Ts family.

The protein localises to the cytoplasm. Functionally, associates with the EF-Tu.GDP complex and induces the exchange of GDP to GTP. It remains bound to the aminoacyl-tRNA.EF-Tu.GTP complex up to the GTP hydrolysis stage on the ribosome. This is Elongation factor Ts (tsf) from Geobacillus kaustophilus (strain HTA426).